The following is a 530-amino-acid chain: Autoinducer-2 kinase (530 aa).

Belongs to the FGGY kinase family.

It localises to the cytoplasm. It carries out the reaction (S)-4,5-dihydroxypentane-2,3-dione + ATP = (2S)-2-hydroxy-3,4-dioxopentyl phosphate + ADP + H(+). Catalyzes the phosphorylation of autoinducer-2 (AI-2) to phospho-AI-2, which subsequently inactivates the transcriptional regulator LsrR and leads to the transcription of the lsr operon. Phosphorylates the ring-open form of (S)-4,5-dihydroxypentane-2,3-dione (DPD), which is the precursor to all AI-2 signaling molecules, at the C5 position. This chain is Autoinducer-2 kinase, found in Escherichia coli O139:H28 (strain E24377A / ETEC).